The chain runs to 303 residues: Probable porphobilinogen deaminase (303 aa).

Residue C240 is modified to S-(dipyrrolylmethanemethyl)cysteine.

This sequence belongs to the HMBS family. The cofactor is dipyrromethane.

The catalysed reaction is 4 porphobilinogen + H2O = hydroxymethylbilane + 4 NH4(+). Its pathway is porphyrin-containing compound metabolism; protoporphyrin-IX biosynthesis; coproporphyrinogen-III from 5-aminolevulinate: step 2/4. Tetrapolymerization of the monopyrrole PBG into the hydroxymethylbilane pre-uroporphyrinogen in several discrete steps. This is Probable porphobilinogen deaminase from Hyperthermus butylicus (strain DSM 5456 / JCM 9403 / PLM1-5).